The sequence spans 129 residues: MGKAKAERRLKDNEAQAVARTIRVSPQKLNLVAALIRGKKVDRALAELEFSRKRIAGTVKKTLESAIANAENNHDLDVDSLIVAEAFVGKSIVMKRFHARGRGRASRVEKPFAHLTIVVREVEAKGEAA.

This sequence belongs to the universal ribosomal protein uL22 family. In terms of assembly, part of the 50S ribosomal subunit.

Its function is as follows. This protein binds specifically to 23S rRNA; its binding is stimulated by other ribosomal proteins, e.g. L4, L17, and L20. It is important during the early stages of 50S assembly. It makes multiple contacts with different domains of the 23S rRNA in the assembled 50S subunit and ribosome. The globular domain of the protein is located near the polypeptide exit tunnel on the outside of the subunit, while an extended beta-hairpin is found that lines the wall of the exit tunnel in the center of the 70S ribosome. The sequence is that of Large ribosomal subunit protein uL22 from Rhizobium meliloti (strain 1021) (Ensifer meliloti).